A 241-amino-acid polypeptide reads, in one-letter code: General transcription factor IIF subunit 2 (241 aa).

The protein belongs to the TFIIF beta subunit family. As to quaternary structure, heterodimer of an alpha and a beta subunit.

It localises to the nucleus. Its function is as follows. TFIIF is a general transcription initiation factor that binds to RNA polymerase II and helps to recruit it to the initiation complex in collaboration with TFIIB. In Dictyostelium discoideum (Social amoeba), this protein is General transcription factor IIF subunit 2 (gtf2f2).